The sequence spans 372 residues: Ribosomal RNA small subunit methyltransferase H (372 aa).

S-adenosyl-L-methionine contacts are provided by residues 44–46 (GGH), aspartate 63, leucine 97, aspartate 111, and glutamine 118. The segment covering 315-334 (RAAERLDPTAEQRRRTDRER) has biased composition (basic and acidic residues). A disordered region spans residues 315–372 (RAAERLDPTAEQRRRTDRERYRRRVRAMHQPGTGSAVRRPTPGDDGTGTDEEGEGHDS). The segment covering 361–372 (TGTDEEGEGHDS) has biased composition (acidic residues).

It belongs to the methyltransferase superfamily. RsmH family.

The protein localises to the cytoplasm. It carries out the reaction cytidine(1402) in 16S rRNA + S-adenosyl-L-methionine = N(4)-methylcytidine(1402) in 16S rRNA + S-adenosyl-L-homocysteine + H(+). Specifically methylates the N4 position of cytidine in position 1402 (C1402) of 16S rRNA. In Salinispora arenicola (strain CNS-205), this protein is Ribosomal RNA small subunit methyltransferase H.